A 304-amino-acid polypeptide reads, in one-letter code: Ribosomal RNA small subunit methyltransferase H (304 aa).

Residues 37–39 (GGH), Asp-57, Phe-79, Asp-100, and His-107 contribute to the S-adenosyl-L-methionine site.

Belongs to the methyltransferase superfamily. RsmH family.

The protein resides in the cytoplasm. The catalysed reaction is cytidine(1402) in 16S rRNA + S-adenosyl-L-methionine = N(4)-methylcytidine(1402) in 16S rRNA + S-adenosyl-L-homocysteine + H(+). Functionally, specifically methylates the N4 position of cytidine in position 1402 (C1402) of 16S rRNA. This chain is Ribosomal RNA small subunit methyltransferase H, found in Phocaeicola vulgatus (strain ATCC 8482 / DSM 1447 / JCM 5826 / CCUG 4940 / NBRC 14291 / NCTC 11154) (Bacteroides vulgatus).